The chain runs to 610 residues: UvrABC system protein C (610 aa).

Residues 16 to 94 form the GIY-YIG domain; it reads SQPGVYRMYD…IKLYQPRYNV (79 aa). The region spanning 204 to 239 is the UVR domain; the sequence is DQVLTQLISRMETASQNLEFEEAARIRDQIQAVRRV.

It belongs to the UvrC family. Interacts with UvrB in an incision complex.

It localises to the cytoplasm. The UvrABC repair system catalyzes the recognition and processing of DNA lesions. UvrC both incises the 5' and 3' sides of the lesion. The N-terminal half is responsible for the 3' incision and the C-terminal half is responsible for the 5' incision. The polypeptide is UvrABC system protein C (Escherichia coli O1:K1 / APEC).